The chain runs to 572 residues: Proline--tRNA ligase (572 aa).

This sequence belongs to the class-II aminoacyl-tRNA synthetase family. ProS type 1 subfamily. Homodimer.

It localises to the cytoplasm. The catalysed reaction is tRNA(Pro) + L-proline + ATP = L-prolyl-tRNA(Pro) + AMP + diphosphate. In terms of biological role, catalyzes the attachment of proline to tRNA(Pro) in a two-step reaction: proline is first activated by ATP to form Pro-AMP and then transferred to the acceptor end of tRNA(Pro). As ProRS can inadvertently accommodate and process non-cognate amino acids such as alanine and cysteine, to avoid such errors it has two additional distinct editing activities against alanine. One activity is designated as 'pretransfer' editing and involves the tRNA(Pro)-independent hydrolysis of activated Ala-AMP. The other activity is designated 'posttransfer' editing and involves deacylation of mischarged Ala-tRNA(Pro). The misacylated Cys-tRNA(Pro) is not edited by ProRS. This is Proline--tRNA ligase from Yersinia pestis (strain Pestoides F).